We begin with the raw amino-acid sequence, 1594 residues long: NAD-specific glutamate dehydrogenase (1594 aa).

The active site involves Lys-816.

The protein belongs to the Glu/Leu/Phe/Val dehydrogenases family. In terms of assembly, interacts with (unphosphorylated) GarA.

It catalyses the reaction L-glutamate + NAD(+) + H2O = 2-oxoglutarate + NH4(+) + NADH + H(+). Its activity is regulated as follows. Activity is inhibited by unphosphorylated GarA. Stimulated by manganese and magnesium. Its function is as follows. Catalyzes the reversible conversion of L-glutamate to 2-oxoglutarate. Highly specific for NAD. The sequence is that of NAD-specific glutamate dehydrogenase (gdh) from Mycolicibacterium smegmatis (strain ATCC 700084 / mc(2)155) (Mycobacterium smegmatis).